The sequence spans 243 residues: Carboxy-S-adenosyl-L-methionine synthase (243 aa).

S-adenosyl-L-methionine is bound by residues Tyr40, 65–67 (GSS), 90–91 (DN), 118–119 (DI), Asn133, and Arg200.

This sequence belongs to the class I-like SAM-binding methyltransferase superfamily. Cx-SAM synthase family. In terms of assembly, homodimer.

The enzyme catalyses prephenate + S-adenosyl-L-methionine = carboxy-S-adenosyl-L-methionine + 3-phenylpyruvate + H2O. Catalyzes the conversion of S-adenosyl-L-methionine (SAM) to carboxy-S-adenosyl-L-methionine (Cx-SAM). The polypeptide is Carboxy-S-adenosyl-L-methionine synthase (Shewanella frigidimarina (strain NCIMB 400)).